Consider the following 271-residue polypeptide: Phosphatidylinositol transfer protein alpha isoform (271 aa).

6 residues coordinate a 1,2-diacyl-sn-glycero-3-phospho-(1D-myo-inositol): threonine 59, lysine 61, glutamate 86, asparagine 90, threonine 97, and lysine 195. Lysine 216 carries the post-translational modification N6-acetyllysine. A compositionally biased stretch (basic and acidic residues) spans 251-264; that stretch reads TKRQLDEMRQKDPV. The tract at residues 251–271 is disordered; the sequence is TKRQLDEMRQKDPVKGMTADD.

The protein belongs to the PtdIns transfer protein family. PI transfer class I subfamily. Post-translationally, phosphorylated by PKC in a calcium and phosphatidylserine-dependent manner. In terms of tissue distribution, expressed in a wide range of tissues.

The protein localises to the cytoplasm. It is found in the nucleus. The catalysed reaction is a 1,2-diacyl-sn-glycero-3-phosphocholine(in) = a 1,2-diacyl-sn-glycero-3-phosphocholine(out). It catalyses the reaction a 1,2-diacyl-sn-glycero-3-phospho-(1D-myo-inositol)(in) = a 1,2-diacyl-sn-glycero-3-phospho-(1D-myo-inositol)(out). Its activity is regulated as follows. Phosphatidylinositol transfer activity is inhibited by N-ethylmaleimide. In terms of biological role, catalyzes the transfer of phosphatidylinositol (PI) and phosphatidylcholine (PC) between membranes. Shows a preference for PI and PC containing shorter saturated or monosaturated acyl chains at the sn-1 and sn-2 positions. Preference order for PC is C16:1 &gt; C16:0 &gt; C18:1 &gt; C18:0 &gt; C20:4 and for PI is C16:1 &gt; C16:0 &gt; C18:1 &gt; C18:0 &gt; C20:4 &gt; C20:3. The polypeptide is Phosphatidylinositol transfer protein alpha isoform (Pitpna) (Rattus norvegicus (Rat)).